A 217-amino-acid chain; its full sequence is L-lactate dehydrogenase B chain (217 aa).

Asn-22 serves as a coordination point for NAD(+). Residues Asn-22 and Arg-53 each contribute to the substrate site. His-77 functions as the Proton acceptor in the catalytic mechanism. Tyr-123 carries the post-translational modification Phosphotyrosine. Substrate is bound at residue Thr-132. N6-acetyllysine is present on Lys-212.

The protein belongs to the LDH/MDH superfamily. LDH family. Homotetramer. Interacts with PTEN upstream reading frame protein MP31; the interaction leads to inhibition of mitochondrial lactate dehydrogenase activity, preventing conversion of lactate to pyruvate in mitochondria.

It is found in the cytoplasm. The protein localises to the mitochondrion inner membrane. It catalyses the reaction (S)-lactate + NAD(+) = pyruvate + NADH + H(+). It participates in fermentation; pyruvate fermentation to lactate; (S)-lactate from pyruvate: step 1/1. Functionally, interconverts simultaneously and stereospecifically pyruvate and lactate with concomitant interconversion of NADH and NAD(+). This Oryctolagus cuniculus (Rabbit) protein is L-lactate dehydrogenase B chain (LDHB).